A 144-amino-acid chain; its full sequence is Large ribosomal subunit protein uL15 (144 aa).

The segment at 1–54 (MRLNTLSPAAGSKHAPKRVGRGMGSGLGKTAGRGHKGQKSRSGGGVRPGFEGGQ) is disordered. Gly residues-rich tracts occupy residues 21–31 (RGMGSGLGKTA) and 42–52 (SGGGVRPGFEG).

Belongs to the universal ribosomal protein uL15 family. As to quaternary structure, part of the 50S ribosomal subunit.

Functionally, binds to the 23S rRNA. The protein is Large ribosomal subunit protein uL15 of Shewanella baltica (strain OS223).